A 239-amino-acid chain; its full sequence is Probable methylthioribulose-1-phosphate dehydratase (239 aa).

Residue cysteine 100 participates in substrate binding. The Zn(2+) site is built by histidine 118 and histidine 120. Catalysis depends on glutamate 141, which acts as the Proton donor/acceptor. Position 197 (histidine 197) interacts with Zn(2+).

The protein belongs to the aldolase class II family. MtnB subfamily. The cofactor is Zn(2+).

The protein resides in the cytoplasm. It catalyses the reaction 5-(methylsulfanyl)-D-ribulose 1-phosphate = 5-methylsulfanyl-2,3-dioxopentyl phosphate + H2O. It participates in amino-acid biosynthesis; L-methionine biosynthesis via salvage pathway; L-methionine from S-methyl-5-thio-alpha-D-ribose 1-phosphate: step 2/6. In terms of biological role, catalyzes the dehydration of methylthioribulose-1-phosphate (MTRu-1-P) into 2,3-diketo-5-methylthiopentyl-1-phosphate (DK-MTP-1-P). This Leishmania major protein is Probable methylthioribulose-1-phosphate dehydratase.